Here is a 381-residue protein sequence, read N- to C-terminus: Alcohol dehydrogenase class-3 (381 aa).

Cysteine 49 provides a ligand contact to Zn(2+). Residue histidine 50 participates in NAD(+) binding. Positions 51 and 71 each coordinate an alcohol. 7 residues coordinate Zn(2+): histidine 71, glutamate 72, cysteine 101, cysteine 104, cysteine 107, cysteine 115, and cysteine 179. Residues 204 to 209 (GLGTVG), aspartate 228, lysine 233, isoleucine 274, 297 to 299 (VGV), 322 to 324 (TAF), and arginine 374 contribute to the NAD(+) site.

It belongs to the zinc-containing alcohol dehydrogenase family. Class-III subfamily. In terms of assembly, homodimer. Requires Zn(2+) as cofactor. Expressed at low levels in the leaves.

The protein localises to the cytoplasm. It carries out the reaction a primary alcohol + NAD(+) = an aldehyde + NADH + H(+). The enzyme catalyses a secondary alcohol + NAD(+) = a ketone + NADH + H(+). The catalysed reaction is S-(hydroxymethyl)glutathione + NADP(+) = S-formylglutathione + NADPH + H(+). It catalyses the reaction S-(hydroxymethyl)glutathione + NAD(+) = S-formylglutathione + NADH + H(+). This chain is Alcohol dehydrogenase class-3 (FDH), found in Zea mays (Maize).